The sequence spans 329 residues: 4-methyl-2-oxopentanoate reductase A (329 aa).

Residues 162–163, 240–242, and Asp-266 contribute to the NAD(+) site; these read GI and TAR. Arg-242 is a catalytic residue. Glu-271 is a catalytic residue. The active-site Proton donor is His-289.

It belongs to the D-isomer specific 2-hydroxyacid dehydrogenase family.

The enzyme catalyses (2R)-hydroxy-4-methylpentanoate + NADP(+) = 4-methyl-2-oxopentanoate + NADPH + H(+). The catalysed reaction is a (2R)-2-hydroxycarboxylate + NADP(+) = a 2-oxocarboxylate + NADPH + H(+). Its function is as follows. 4-methyl-2-oxopentanoate (MOA) reductase that reduces MOA, a possible intermediate in leucine synthesis, to D-leucate in a NADPH- or NADH-dependent manner, but with a preference for NADPH. In addition to MOA, shows broad substrate specificity toward 2-keto acids. This Aspergillus oryzae (strain ATCC 42149 / RIB 40) (Yellow koji mold) protein is 4-methyl-2-oxopentanoate reductase A.